We begin with the raw amino-acid sequence, 622 residues long: 1,4-alpha-glucan branching enzyme GlgB (622 aa).

Aspartate 300 functions as the Nucleophile in the catalytic mechanism. The active-site Proton donor is the glutamate 351.

It belongs to the glycosyl hydrolase 13 family. GlgB subfamily. As to quaternary structure, monomer.

The catalysed reaction is Transfers a segment of a (1-&gt;4)-alpha-D-glucan chain to a primary hydroxy group in a similar glucan chain.. Its pathway is glycan biosynthesis; glycogen biosynthesis. In terms of biological role, catalyzes the formation of the alpha-1,6-glucosidic linkages in glycogen by scission of a 1,4-alpha-linked oligosaccharide from growing alpha-1,4-glucan chains and the subsequent attachment of the oligosaccharide to the alpha-1,6 position. In Streptococcus agalactiae serotype V (strain ATCC BAA-611 / 2603 V/R), this protein is 1,4-alpha-glucan branching enzyme GlgB.